The sequence spans 95 residues: Aspartyl/glutamyl-tRNA(Asn/Gln) amidotransferase subunit C (95 aa).

It belongs to the GatC family. As to quaternary structure, heterotrimer of A, B and C subunits.

The enzyme catalyses L-glutamyl-tRNA(Gln) + L-glutamine + ATP + H2O = L-glutaminyl-tRNA(Gln) + L-glutamate + ADP + phosphate + H(+). The catalysed reaction is L-aspartyl-tRNA(Asn) + L-glutamine + ATP + H2O = L-asparaginyl-tRNA(Asn) + L-glutamate + ADP + phosphate + 2 H(+). Allows the formation of correctly charged Asn-tRNA(Asn) or Gln-tRNA(Gln) through the transamidation of misacylated Asp-tRNA(Asn) or Glu-tRNA(Gln) in organisms which lack either or both of asparaginyl-tRNA or glutaminyl-tRNA synthetases. The reaction takes place in the presence of glutamine and ATP through an activated phospho-Asp-tRNA(Asn) or phospho-Glu-tRNA(Gln). The sequence is that of Aspartyl/glutamyl-tRNA(Asn/Gln) amidotransferase subunit C from Thioalkalivibrio sulfidiphilus (strain HL-EbGR7).